The following is a 264-amino-acid chain: MALYFIGLGLYDERDITLKGLKTARKCDKIFAEFYTSLLAGTTMERIEGLIGKPIIRLSREDVELNFEKIVLPEAKEKDVAFLTAGDPMVATTHSDLRIRAKKAGVESYVIHAPSIYSAVAVTGLQIYKFGKSATVAYPERNWFPTSYYDVIKENRERGLHTLLFLDIKAEQNRYMTANEAMEILLQVEDMKKEGIFTPETLVVVLARAGSLNPTIRAGYVKDMIHEDFGRQPHVLIVPGRLHVVEAEYLVEFAGAPEEILEEV.

S-adenosyl-L-methionine is bound by residues L10, D87, V90, 115 to 116 (SI), L166, A209, and H234.

The protein belongs to the diphthine synthase family. Homodimer.

The enzyme catalyses 2-[(3S)-amino-3-carboxypropyl]-L-histidyl-[translation elongation factor 2] + 3 S-adenosyl-L-methionine = diphthine-[translation elongation factor 2] + 3 S-adenosyl-L-homocysteine + 3 H(+). It functions in the pathway protein modification; peptidyl-diphthamide biosynthesis. Functionally, S-adenosyl-L-methionine-dependent methyltransferase that catalyzes the trimethylation of the amino group of the modified target histidine residue in translation elongation factor 2 (EF-2), to form an intermediate called diphthine. The three successive methylation reactions represent the second step of diphthamide biosynthesis. The protein is Diphthine synthase of Thermococcus gammatolerans (strain DSM 15229 / JCM 11827 / EJ3).